The following is a 316-amino-acid chain: Adenine deaminase (316 aa).

3 residues coordinate Zn(2+): histidine 14, histidine 16, and histidine 194. Glutamate 197 functions as the Proton donor in the catalytic mechanism. Aspartate 275 is a binding site for Zn(2+). Aspartate 276 is a binding site for substrate.

Belongs to the metallo-dependent hydrolases superfamily. Adenosine and AMP deaminases family. Adenine deaminase type 2 subfamily. Zn(2+) is required as a cofactor.

It catalyses the reaction adenine + H2O + H(+) = hypoxanthine + NH4(+). Its function is as follows. Catalyzes the hydrolytic deamination of adenine to hypoxanthine. Plays an important role in the purine salvage pathway and in nitrogen catabolism. This is Adenine deaminase from Pseudomonas aeruginosa (strain LESB58).